We begin with the raw amino-acid sequence, 114 residues long: Large ribosomal subunit protein uL18 (114 aa).

The protein belongs to the universal ribosomal protein uL18 family. As to quaternary structure, part of the 50S ribosomal subunit; part of the 5S rRNA/L5/L18/L25 subcomplex. Contacts the 23S rRNA. Contacts protein L27 and the 5S rRNA.

Its function is as follows. This is one of the proteins that bind and probably mediate the attachment of the 5S RNA into the large ribosomal subunit, where it forms part of the central protuberance. In Deinococcus radiodurans (strain ATCC 13939 / DSM 20539 / JCM 16871 / CCUG 27074 / LMG 4051 / NBRC 15346 / NCIMB 9279 / VKM B-1422 / R1), this protein is Large ribosomal subunit protein uL18 (rplR).